The chain runs to 34 residues: Unknown protein 5 (34 aa).

In Pseudotsuga menziesii (Douglas-fir), this protein is Unknown protein 5.